A 341-amino-acid polypeptide reads, in one-letter code: L-threonine 3-dehydrogenase (341 aa).

Cys-38 is a Zn(2+) binding site. Catalysis depends on charge relay system residues Thr-40 and His-43. Residues His-63, Glu-64, Cys-93, Cys-96, Cys-99, and Cys-107 each contribute to the Zn(2+) site. NAD(+) contacts are provided by residues Ile-175, Asp-195, Arg-200, 262–264 (LGI), and 286–287 (IY).

The protein belongs to the zinc-containing alcohol dehydrogenase family. Homotetramer. Zn(2+) is required as a cofactor.

The protein resides in the cytoplasm. It carries out the reaction L-threonine + NAD(+) = (2S)-2-amino-3-oxobutanoate + NADH + H(+). The protein operates within amino-acid degradation; L-threonine degradation via oxydo-reductase pathway; glycine from L-threonine: step 1/2. In terms of biological role, catalyzes the NAD(+)-dependent oxidation of L-threonine to 2-amino-3-ketobutyrate. The sequence is that of L-threonine 3-dehydrogenase from Salmonella gallinarum (strain 287/91 / NCTC 13346).